Consider the following 532-residue polypeptide: Flavin-containing monooxygenase 1 (532 aa).

A2 is modified (N-acetylalanine). The Lumenal portion of the chain corresponds to 2-510 (AKRVAIVGAG…TRIVKESPSP (509 aa)). Residues 9-13 (GAGVS), E32, 40-41 (LW), and 61-62 (NS) contribute to the FAD site. Position 60–61 (60–61 (SN)) interacts with NADP(+). N120 carries N-linked (GlcNAc...) (high mannose) asparagine glycosylation. Position 195-198 (195-198 (SGTD)) interacts with NADP(+). A helical transmembrane segment spans residues 511-531 (FASLLKLFSFLALLVAIFQIF). Residue L532 is a topological domain, cytoplasmic.

The protein belongs to the FMO family. The cofactor is FAD. Liver.

The protein localises to the endoplasmic reticulum membrane. It catalyses the reaction hypotaurine + NADPH + O2 + H(+) = taurine + NADP(+) + H2O. The catalysed reaction is hypotaurine + NADH + O2 + H(+) = taurine + NAD(+) + H2O. The enzyme catalyses trimethylamine + NADPH + O2 = trimethylamine N-oxide + NADP(+) + H2O. It carries out the reaction N,N-dimethylaniline + NADPH + O2 + H(+) = N,N-dimethylaniline N-oxide + NADP(+) + H2O. Functionally, broad spectrum monooxygenase that catalyzes the oxygenation of a wide variety of nitrogen- and sulfur-containing compounds including xenobiotics. Catalyzes the S-oxygenation of hypotaurine to produce taurine, an organic osmolyte involved in cell volume regulation as well as a variety of cytoprotective and developmental processes. In vitro, catalyzes the N-oxygenation of trimethylamine (TMA) to produce trimethylamine N-oxide (TMAO) and could therefore participate to the detoxification of this compound that is generated by the action of gut microbiota from dietary precursors such as choline, choline containing compounds, betaine or L-carnitine. The protein is Flavin-containing monooxygenase 1 (FMO1) of Sus scrofa (Pig).